The chain runs to 143 residues: Large ribosomal subunit protein uL11 (143 aa).

This sequence belongs to the universal ribosomal protein uL11 family. As to quaternary structure, part of the ribosomal stalk of the 50S ribosomal subunit. Interacts with L10 and the large rRNA to form the base of the stalk. L10 forms an elongated spine to which L12 dimers bind in a sequential fashion forming a multimeric L10(L12)X complex. In terms of processing, one or more lysine residues are methylated.

In terms of biological role, forms part of the ribosomal stalk which helps the ribosome interact with GTP-bound translation factors. This chain is Large ribosomal subunit protein uL11, found in Paraburkholderia xenovorans (strain LB400).